Consider the following 382-residue polypeptide: Anhydro-N-acetylmuramic acid kinase (382 aa).

Residue 9–16 (GTSLDGID) coordinates ATP.

It belongs to the anhydro-N-acetylmuramic acid kinase family.

The enzyme catalyses 1,6-anhydro-N-acetyl-beta-muramate + ATP + H2O = N-acetyl-D-muramate 6-phosphate + ADP + H(+). It participates in amino-sugar metabolism; 1,6-anhydro-N-acetylmuramate degradation. Its pathway is cell wall biogenesis; peptidoglycan recycling. Its function is as follows. Catalyzes the specific phosphorylation of 1,6-anhydro-N-acetylmuramic acid (anhMurNAc) with the simultaneous cleavage of the 1,6-anhydro ring, generating MurNAc-6-P. Is required for the utilization of anhMurNAc either imported from the medium or derived from its own cell wall murein, and thus plays a role in cell wall recycling. This chain is Anhydro-N-acetylmuramic acid kinase, found in Bacillus cereus (strain G9842).